The chain runs to 190 residues: Xanthine phosphoribosyltransferase (190 aa).

Xanthine is bound by residues leucine 20 and asparagine 27. 128 to 132 (ANGKA) contacts 5-phospho-alpha-D-ribose 1-diphosphate. Lysine 156 lines the xanthine pocket.

This sequence belongs to the purine/pyrimidine phosphoribosyltransferase family. Xpt subfamily. Homodimer.

It is found in the cytoplasm. It carries out the reaction XMP + diphosphate = xanthine + 5-phospho-alpha-D-ribose 1-diphosphate. It participates in purine metabolism; XMP biosynthesis via salvage pathway; XMP from xanthine: step 1/1. Its function is as follows. Converts the preformed base xanthine, a product of nucleic acid breakdown, to xanthosine 5'-monophosphate (XMP), so it can be reused for RNA or DNA synthesis. This is Xanthine phosphoribosyltransferase from Stutzerimonas stutzeri (strain A1501) (Pseudomonas stutzeri).